The following is an 837-amino-acid chain: Tuftelin-interacting protein 11 (837 aa).

Residues 1–13 (MSLSHLYRDGEGH) show a composition bias toward basic and acidic residues. 3 disordered regions span residues 1-31 (MSLS…DWDL), 54-73 (WAER…RARD), and 85-136 (LKKG…AGGT). The required for interaction with DHX15 stretch occupies residues 1–50 (MSLSHLYRDGEGHMDDDEDERENFEITDWDLQNEFNPNRQRHWQTKEEAT). Position 2 is a phosphoserine (serine 2). The span at 14 to 28 (MDDDEDERENFEITD) shows a compositional bias: acidic residues. Residues 54–64 (WAERDSDEERP) show a composition bias toward basic and acidic residues. Phosphoserine occurs at positions 59 and 98. Positions 91 to 102 (EEAELEDSDDEE) are enriched in acidic residues. Over residues 103–116 (KPVKQDEFPKDFGP) the composition is skewed to basic and acidic residues. Serine 144 carries the phosphoserine modification. Residues 149–195 (TKGIGQKLLQKMGYVPGRGLGKNAQGIINPIEAKQRKGKGAVGAYGS) form the G-patch domain. Disordered stretches follow at residues 183 to 236 (QRKG…KKKP) and 287 to 313 (HKHS…ARAP). At serine 210 the chain carries Phosphoserine. The span at 217–231 (EFQKELSQWRKDPSG) shows a compositional bias: basic and acidic residues. The Nuclear localization signal signature appears at 700 to 705 (VKDKFN). Residues 710–734 (IMNRAVSSNVGAYMQPGAREHIAYL) form a required for nuclear speckle localization region.

This sequence belongs to the TFP11/STIP family. As to quaternary structure, identified in the spliceosome C complex. Found in the Intron Large (IL) complex, a post-mRNA release spliceosomal complex containing the excised intron, U2, U5 and U6 snRNPs, and splicing factors. Interacts with TUFT1. Interacts with DHX15; indicative for a recruitment of DHX15 to the IL complex. Interacts with GCFC2.

It is found in the cytoplasm. The protein localises to the nucleus. Functionally, involved in pre-mRNA splicing, specifically in spliceosome disassembly during late-stage splicing events. Intron turnover seems to proceed through reactions in two lariat-intron associated complexes termed Intron Large (IL) and Intron Small (IS). In cooperation with DHX15 seems to mediate the transition of the U2, U5 and U6 snRNP-containing IL complex to the snRNP-free IS complex leading to efficient debranching and turnover of excised introns. May play a role in the differentiation of ameloblasts and odontoblasts or in the forming of the enamel extracellular matrix. In Bos taurus (Bovine), this protein is Tuftelin-interacting protein 11 (TFIP11).